The sequence spans 146 residues: Hemoglobin subunit beta-2 (146 aa).

The Globin domain maps to 2–146; sequence HWSAEEKQLI…VAHALARRYH (145 aa). Positions 63 and 92 each coordinate heme b.

Belongs to the globin family. In terms of assembly, heterotetramer of two alpha chains and two beta chains. In terms of tissue distribution, red blood cells.

In terms of biological role, involved in oxygen transport from the lung to the various peripheral tissues. The chain is Hemoglobin subunit beta-2 (HBB2) from Naja naja (Indian cobra).